The primary structure comprises 379 residues: Tryptophan--tRNA ligase, mitochondrial (379 aa).

ATP contacts are provided by residues Gln-42 and 48-51 (HLGN). Residues 43–51 (PTGCFHLGN) carry the 'HIGH' region motif. Asp-184 lines the L-tryptophan pocket. ATP is bound by residues 196-198 (GDD), Val-235, 244-248 (KMSKS), and Lys-247. A 'KMSKS' region motif is present at residues 244–248 (KMSKS).

Belongs to the class-I aminoacyl-tRNA synthetase family. In terms of assembly, homodimer.

Its subcellular location is the mitochondrion matrix. The catalysed reaction is tRNA(Trp) + L-tryptophan + ATP = L-tryptophyl-tRNA(Trp) + AMP + diphosphate + H(+). Mitochondrial aminoacyl-tRNA synthetase that catalyzes the attachment of tryptophan to tRNA(Trp). The polypeptide is Tryptophan--tRNA ligase, mitochondrial (MSW1) (Saccharomyces cerevisiae (strain ATCC 204508 / S288c) (Baker's yeast)).